A 213-amino-acid polypeptide reads, in one-letter code: 24 kDa ookinete surface protein (213 aa).

The signal sequence occupies residues 1-28; it reads MNFKYSFIFLFFIQLAIRYNNAKITVDT. The EGF-like 1; truncated domain occupies 30 to 59; the sequence is CKGGKLIQMSNHYECKCPSGYALKTENTCE. EGF-like domains are found at residues 60-108 and 108-148; these read PIVK…NICK and KPTR…GKCT. Cystine bridges form between cysteine 64–cysteine 80, cysteine 74–cysteine 94, cysteine 96–cysteine 107, cysteine 112–cysteine 122, cysteine 117–cysteine 134, and cysteine 136–cysteine 147. The region spanning 151–175 is the EGF-like 4; truncated domain; the sequence is GETKCLLKCKAAEECKLTGKHYECV. Residue asparagine 190 is the site of GPI-anchor amidated asparagine attachment. A glycan (N-linked (GlcNAc...) asparagine) is linked at asparagine 190. Residues 191–213 constitute a propeptide, removed in mature form; that stretch reads SSFMNGMSIISIIALLVIYVIVM.

The protein resides in the cell membrane. The sequence is that of 24 kDa ookinete surface protein from Plasmodium berghei (strain Anka).